Consider the following 72-residue polypeptide: UPF0154 protein YneF (72 aa).

The helical transmembrane segment at 4-24 (WVGILVGVVALLIGVALGFFI) threads the bilayer.

The protein belongs to the UPF0154 family.

The protein localises to the membrane. The sequence is that of UPF0154 protein YneF (yneF) from Bacillus subtilis (strain 168).